We begin with the raw amino-acid sequence, 664 residues long: Macrolide export ATP-binding/permease protein MacB (664 aa).

Positions L8 to D245 constitute an ABC transporter domain. G44 to S51 provides a ligand contact to ATP. The next 4 helical transmembrane spans lie at L283–G303, G543–V563, I602–A622, and I627–W647.

Belongs to the ABC transporter superfamily. Macrolide exporter (TC 3.A.1.122) family. In terms of assembly, homodimer.

It localises to the cell inner membrane. Its function is as follows. Non-canonical ABC transporter that contains transmembrane domains (TMD), which form a pore in the inner membrane, and an ATP-binding domain (NBD), which is responsible for energy generation. Confers resistance against macrolides. This chain is Macrolide export ATP-binding/permease protein MacB, found in Chlorobium luteolum (strain DSM 273 / BCRC 81028 / 2530) (Pelodictyon luteolum).